The primary structure comprises 316 residues: Homoserine kinase (316 aa).

ATP is bound at residue 97–107; sequence PPARGLGSSAS.

Belongs to the GHMP kinase family. Homoserine kinase subfamily.

Its subcellular location is the cytoplasm. It carries out the reaction L-homoserine + ATP = O-phospho-L-homoserine + ADP + H(+). It functions in the pathway amino-acid biosynthesis; L-threonine biosynthesis; L-threonine from L-aspartate: step 4/5. Its function is as follows. Catalyzes the ATP-dependent phosphorylation of L-homoserine to L-homoserine phosphate. In Prochlorococcus marinus (strain MIT 9303), this protein is Homoserine kinase.